The following is a 202-amino-acid chain: Dephospho-CoA kinase (202 aa).

In terms of domain architecture, DPCK spans Val-4–Asn-201. Ala-12–Thr-17 serves as a coordination point for ATP.

Belongs to the CoaE family.

It localises to the cytoplasm. The enzyme catalyses 3'-dephospho-CoA + ATP = ADP + CoA + H(+). It functions in the pathway cofactor biosynthesis; coenzyme A biosynthesis; CoA from (R)-pantothenate: step 5/5. Catalyzes the phosphorylation of the 3'-hydroxyl group of dephosphocoenzyme A to form coenzyme A. This chain is Dephospho-CoA kinase, found in Vibrio vulnificus (strain YJ016).